The chain runs to 302 residues: MSDSEEVVEEYEQEQEEEYVEEEEEEWLEEDDGQEDQVDEEEEETEETTAEEQEDETKAPGEGGEGDREQEPGEGESKPKPKPFMPNLVPPKIPDGERLDFDDIHRKRMEKDLNELQALIEAHFESRKKEEEELISLKDRIEQRRAERAEQQRIRSEREKERQARMAEERARKEEEEARKKAEKEARKKKAFSNMLHFGGYMQKSEKKGGKKQTEREKKKKILSERRKPLNIDHLSEDKLRDKAKELWQTIRDLEAEKFDLQEKFKRQKYEINVLRNRVSDHQKVKGSKAARGKTMVGGRWK.

Acidic residues predominate over residues 1-55; sequence MSDSEEVVEEYEQEQEEEYVEEEEEEWLEEDDGQEDQVDEEEEETEETTAEEQED. Disordered regions lie at residues 1–99, 138–230, and 280–302; these read MSDS…GERL, KDRI…RKPL, and SDHQ…GRWK. Serine 2 bears the N-acetylserine mark. At serine 2 the chain carries Phosphoserine; by CK2. The segment covering 65–79 has biased composition (basic and acidic residues); the sequence is EGDREQEPGEGESKP. The span at 82-93 shows a compositional bias: pro residues; sequence KPFMPNLVPPKI. Basic and acidic residues-rich tracts occupy residues 138–186 and 204–230; these read KDRI…EKEA and KSEK…RKPL.

This sequence belongs to the troponin T family.

Troponin T is the tropomyosin-binding subunit of troponin, the thin filament regulatory complex which confers calcium-sensitivity to striated muscle actomyosin ATPase activity. The protein is Troponin T, cardiac muscle isoforms (TNNT2) of Gallus gallus (Chicken).